A 362-amino-acid polypeptide reads, in one-letter code: Heat-inducible transcription repressor HrcA (362 aa).

It belongs to the HrcA family.

Its function is as follows. Negative regulator of class I heat shock genes (grpE-dnaK-dnaJ and groELS operons). Prevents heat-shock induction of these operons. The protein is Heat-inducible transcription repressor HrcA of Nitrobacter hamburgensis (strain DSM 10229 / NCIMB 13809 / X14).